We begin with the raw amino-acid sequence, 282 residues long: Caspase-3 (282 aa).

Residues histidine 131 and cysteine 174 contribute to the active site.

The protein belongs to the peptidase C14A family. In terms of assembly, heterotetramer that consists of two anti-parallel arranged heterodimers, each one formed by a 17 kDa (p17) and a 12 kDa (p12) subunit.

Its subcellular location is the cytoplasm. It catalyses the reaction Strict requirement for an Asp residue at positions P1 and P4. It has a preferred cleavage sequence of Asp-Xaa-Xaa-Asp-|- with a hydrophobic amino-acid residue at P2 and a hydrophilic amino-acid residue at P3, although Val or Ala are also accepted at this position.. Functionally, important mediator of apoptosis. At the onset of apoptosis, it proteolytically cleaves poly(ADP-ribose) polymerase PARP1 at a '216-Asp-|-Gly-217' bond. This is Caspase-3 (casp3) from Xenopus laevis (African clawed frog).